We begin with the raw amino-acid sequence, 240 residues long: UDP-2,3-diacylglucosamine hydrolase (240 aa).

The Mn(2+) site is built by aspartate 9, histidine 11, aspartate 43, asparagine 81, and histidine 116. 81–82 (NR) is a binding site for substrate. Residues aspartate 124, serine 162, lysine 166, lysine 169, and histidine 197 each coordinate substrate. Histidine 197 and histidine 199 together coordinate Mn(2+).

The protein belongs to the LpxH family. The cofactor is Mn(2+).

It is found in the cell inner membrane. The enzyme catalyses UDP-2-N,3-O-bis[(3R)-3-hydroxytetradecanoyl]-alpha-D-glucosamine + H2O = 2-N,3-O-bis[(3R)-3-hydroxytetradecanoyl]-alpha-D-glucosaminyl 1-phosphate + UMP + 2 H(+). The protein operates within glycolipid biosynthesis; lipid IV(A) biosynthesis; lipid IV(A) from (3R)-3-hydroxytetradecanoyl-[acyl-carrier-protein] and UDP-N-acetyl-alpha-D-glucosamine: step 4/6. Its function is as follows. Hydrolyzes the pyrophosphate bond of UDP-2,3-diacylglucosamine to yield 2,3-diacylglucosamine 1-phosphate (lipid X) and UMP by catalyzing the attack of water at the alpha-P atom. Involved in the biosynthesis of lipid A, a phosphorylated glycolipid that anchors the lipopolysaccharide to the outer membrane of the cell. The sequence is that of UDP-2,3-diacylglucosamine hydrolase from Neisseria meningitidis serogroup A / serotype 4A (strain DSM 15465 / Z2491).